Here is a 186-residue protein sequence, read N- to C-terminus: MSESAAQEIPMSRRQLLSFVTGGAIAATTAATLYPVVLYFLPPSTAGGGEGVAAKDKEGKDISVSKLLAAATPGEPVLTLGLDVNGGDATYIVINDQKEIANFGINAVCTHLGCVVPWDNGAKQFKCPCHGSVYNADGGLERGPAPQPLALVKATVSDDKVLIAPWTEQDFRCTDLWCNKDPYWVK.

A helical membrane pass occupies residues 16-38; the sequence is LLSFVTGGAIAATTAATLYPVVL. Residues 74–163 form the Rieske domain; that stretch reads GEPVLTLGLD…ATVSDDKVLI (90 aa). [2Fe-2S] cluster contacts are provided by Cys109, His111, Cys127, and His130. A disulfide bridge links Cys114 with Cys129.

The protein belongs to the Rieske iron-sulfur protein family. The 4 large subunits of the cytochrome b6-f complex are cytochrome b6, subunit IV (17 kDa polypeptide, PetD), cytochrome f and the Rieske protein, while the 4 small subunits are PetG, PetL, PetM and PetN. The complex functions as a dimer. It depends on [2Fe-2S] cluster as a cofactor.

Its subcellular location is the cell inner membrane. The enzyme catalyses 2 oxidized [plastocyanin] + a plastoquinol + 2 H(+)(in) = 2 reduced [plastocyanin] + a plastoquinone + 4 H(+)(out). Component of the cytochrome b6-f complex, which mediates electron transfer between photosystem II (PSII) and photosystem I (PSI), cyclic electron flow around PSI, and state transitions. This Gloeobacter violaceus (strain ATCC 29082 / PCC 7421) protein is Cytochrome b6-f complex iron-sulfur subunit.